The chain runs to 465 residues: Ribulose bisphosphate carboxylase large chain (465 aa).

Lys-4 bears the N6,N6,N6-trimethyllysine mark. Asn-113 and Thr-163 together coordinate substrate. Lys-165 serves as the catalytic Proton acceptor. Lys-167 contacts substrate. The Mg(2+) site is built by Lys-191, Asp-193, and Glu-194. Lys-191 is subject to N6-carboxylysine. Residue His-284 is the Proton acceptor of the active site. Arg-285, His-317, and Ser-369 together coordinate substrate.

It belongs to the RuBisCO large chain family. Type I subfamily. As to quaternary structure, heterohexadecamer of 8 large chains and 8 small chains; disulfide-linked. The disulfide link is formed within the large subunit homodimers. It depends on Mg(2+) as a cofactor. In terms of processing, the disulfide bond which can form in the large chain dimeric partners within the hexadecamer appears to be associated with oxidative stress and protein turnover.

It localises to the plastid. The protein resides in the chloroplast. The enzyme catalyses 2 (2R)-3-phosphoglycerate + 2 H(+) = D-ribulose 1,5-bisphosphate + CO2 + H2O. It carries out the reaction D-ribulose 1,5-bisphosphate + O2 = 2-phosphoglycolate + (2R)-3-phosphoglycerate + 2 H(+). In terms of biological role, ruBisCO catalyzes two reactions: the carboxylation of D-ribulose 1,5-bisphosphate, the primary event in carbon dioxide fixation, as well as the oxidative fragmentation of the pentose substrate in the photorespiration process. Both reactions occur simultaneously and in competition at the same active site. The sequence is that of Ribulose bisphosphate carboxylase large chain from Fragaria ananassa (Strawberry).